Reading from the N-terminus, the 23-residue chain is Conolysin-Mt1 (23 aa).

Serine 22 is modified (serine amide).

In terms of tissue distribution, expressed by the venom duct.

It is found in the secreted. Its function is as follows. This cytolytic peptide has ability to disrupt the integrity of cell membranes from both prokaryotes and eukaryotes. It permeabilizes both negatively charged prokaryotic (PE:PG) and zwitterionic eukaryotic (PC:cholesterol) model membranes. It has potent hemolytic activity on human erythrocytes and exhibits low antimicrobial activity against the Gram-negative bacterium E.coli (MIC&gt;50 uM) and the Gram-positive bacterium S.aureus (MIC=25-50 uM). Intracranial injection causes mice to shuffle backward until the encounter an obstacle, at which time the mouse jump into the air. The backward shuffle is reminiscent to the signature dance 'moonwalk' that gained widespread popularity after being performed by Michael Jackson. This chain is Conolysin-Mt1, found in Conus mustelinus (Weasel cone).